Consider the following 456-residue polypeptide: Gamma-aminobutyric acid receptor subunit alpha-1 (456 aa).

An N-terminal signal peptide occupies residues 1–27 (MRKSPGLSDCLWAWILLLSTLTGRSYG). Residues 28–253 (QPSLQDELKD…FHLKRKIGYF (226 aa)) lie on the Extracellular side of the membrane. An N-linked (GlcNAc...) asparagine glycan is attached at Asn-38. Arg-94 provides a ligand contact to 4-aminobutanoate. Asn-138 is a glycosylation site (N-linked (GlcNAc...) asparagine). 4-aminobutanoate is bound at residue Thr-157. Cys-166 and Cys-180 form a disulfide bridge. The chain crosses the membrane as a helical span at residues 254-274 (VIQTYLPCIMTVILSQVSFWL). Topologically, residues 275–279 (NRESV) are cytoplasmic. A helical membrane pass occupies residues 280–301 (PARTVFGVTTVLTMTTLSISAR). Topologically, residues 302–311 (NSLPKVAYAT) are extracellular. Residues 312-333 (AMDWFIAVCYAFVFSALIEFAT) form a helical membrane-spanning segment. At 334 to 421 (VNYFTKRGYA…TFNSVSKIDR (88 aa)) the chain is on the cytoplasmic side. A helical membrane pass occupies residues 422-441 (LSRIAFPLLFGIFNLIYWAT). The Extracellular portion of the chain corresponds to 442-456 (YLNREPQLKAPTPHQ).

This sequence belongs to the ligand-gated ion channel (TC 1.A.9) family. Gamma-aminobutyric acid receptor (TC 1.A.9.5) subfamily. GABRA1 sub-subfamily. Heteropentamer, formed by a combination of alpha (GABRA1-6), beta (GABRB1-3), gamma (GABRG1-3), delta (GABRD), epsilon (GABRE), rho (GABRR1-3), pi (GABRP) and theta (GABRQ) subunits, each subunit exhibiting distinct physiological and pharmacological properties. Interacts with UBQLN1. Interacts with TRAK1. Interacts with KIF21B. Identified in a complex of 720 kDa composed of LHFPL4, NLGN2, GABRA1, GABRB2, GABRG2 and GABRB3. Interacts with LHFPL4. Interacts with NLGN2. Interacts with SHISA7; interaction leads to the regulation of GABA(A) receptor trafficking, channel deactivation kinetics and pharmacology.

It localises to the postsynaptic cell membrane. The protein localises to the cell membrane. Its subcellular location is the cytoplasmic vesicle membrane. The enzyme catalyses chloride(in) = chloride(out). Allosterically activated by benzodiazepines, the neuroanesthetic alphaxalone and pentobarbital. Inhibited by the antagonist bicuculline. Potentiated by histamine. Alpha subunit of the heteropentameric ligand-gated chloride channel gated by gamma-aminobutyric acid (GABA), a major inhibitory neurotransmitter in the brain. GABA-gated chloride channels, also named GABA(A) receptors (GABAAR), consist of five subunits arranged around a central pore and contain GABA active binding site(s) located at the alpha and beta subunit interface(s). When activated by GABA, GABAARs selectively allow the flow of chloride anions across the cell membrane down their electrochemical gradient. Alpha-1/GABRA1-containing GABAARs are largely synaptic. Chloride influx into the postsynaptic neuron following GABAAR opening decreases the neuron ability to generate a new action potential, thereby reducing nerve transmission. GABAARs containing alpha-1 and beta-2 or -3 subunits exhibit synaptogenic activity; the gamma-2 subunit being necessary but not sufficient to induce rapid synaptic contacts formation. GABAARs function also as histamine receptor where histamine binds at the interface of two neighboring beta subunits and potentiates GABA response. GABAARs containing alpha, beta and epsilon subunits also permit spontaneous chloride channel activity while preserving the structural information required for GABA-gated openings. Alpha-1-mediated plasticity in the orbitofrontal cortex regulates context-dependent action selection. Together with rho subunits, may also control neuronal and glial GABAergic transmission in the cerebellum. The chain is Gamma-aminobutyric acid receptor subunit alpha-1 (GABRA1) from Pongo abelii (Sumatran orangutan).